A 124-amino-acid polypeptide reads, in one-letter code: Small ribosomal subunit protein bS6 (124 aa).

Residues 96-124 (ETAPSPMMKEVQREEARKAAQTTTEGQPA) form a disordered region. Polar residues predominate over residues 115-124 (AQTTTEGQPA).

This sequence belongs to the bacterial ribosomal protein bS6 family.

In terms of biological role, binds together with bS18 to 16S ribosomal RNA. The chain is Small ribosomal subunit protein bS6 from Cupriavidus metallidurans (strain ATCC 43123 / DSM 2839 / NBRC 102507 / CH34) (Ralstonia metallidurans).